The following is a 154-amino-acid chain: Spermatogenesis-associated protein 19, mitochondrial (154 aa).

The N-terminal 24 residues, 1-24 (MIITTWIVYILARKGAGLPFPPKV), are a transit peptide targeting the mitochondrion. A phosphoserine mark is found at serine 26 and serine 116.

Its subcellular location is the mitochondrion outer membrane. The protein resides in the mitochondrion. It localises to the cell projection. The protein localises to the cilium. It is found in the flagellum. Its function is as follows. Essential for sperm motility and male fertility. Plays an important role in sperm motility by regulating the organization and function of the mitochondria and is also required for correct sperm midpiece assembly. The protein is Spermatogenesis-associated protein 19, mitochondrial (SPATA19) of Bos taurus (Bovine).